The primary structure comprises 303 residues: Pseudouridine-5'-phosphate glycosidase (303 aa).

Glutamate 23 acts as the Proton donor in catalysis. Substrate contacts are provided by lysine 85 and valine 105. A Mn(2+)-binding site is contributed by aspartate 137. 139 to 141 (SQD) lines the substrate pocket. Lysine 158 acts as the Nucleophile in catalysis.

The protein belongs to the pseudouridine-5'-phosphate glycosidase family. As to quaternary structure, homotrimer. Requires Mn(2+) as cofactor.

It catalyses the reaction D-ribose 5-phosphate + uracil = psi-UMP + H2O. Functionally, catalyzes the reversible cleavage of pseudouridine 5'-phosphate (PsiMP) to ribose 5-phosphate and uracil. Functions biologically in the cleavage direction, as part of a pseudouridine degradation pathway. This is Pseudouridine-5'-phosphate glycosidase from Myxococcus xanthus (strain DK1622).